A 560-amino-acid polypeptide reads, in one-letter code: Long-chain-fatty-acid--CoA ligase (560 aa).

This sequence belongs to the ATP-dependent AMP-binding enzyme family.

It catalyses the reaction a long-chain fatty acid + ATP + CoA = a long-chain fatty acyl-CoA + AMP + diphosphate. The sequence is that of Long-chain-fatty-acid--CoA ligase (lcfA) from Bacillus subtilis (strain 168).